Consider the following 237-residue polypeptide: Periplasmic deoxyribonuclease (237 aa).

The first 27 residues, 1 to 27 (MSRPSRVLGLPLLSLGLTLLVSTPLQA), serve as a signal peptide directing secretion.

It belongs to the EndA/NucM nuclease family.

The protein resides in the periplasm. Functionally, endonuclease which is capable of degrading plasmid DNA. The polypeptide is Periplasmic deoxyribonuclease (dnsH) (Aeromonas hydrophila).